A 255-amino-acid chain; its full sequence is Type III pantothenate kinase (255 aa).

Position 6-13 (6-13 (DVGNTNIV)) interacts with ATP. Residues Y100 and 107-110 (GADR) contribute to the substrate site. The active-site Proton acceptor is the D109. D129 is a K(+) binding site. T132 is a binding site for ATP. Position 184 (T184) interacts with substrate.

The protein belongs to the type III pantothenate kinase family. Homodimer. It depends on NH4(+) as a cofactor. The cofactor is K(+).

It localises to the cytoplasm. The enzyme catalyses (R)-pantothenate + ATP = (R)-4'-phosphopantothenate + ADP + H(+). Its pathway is cofactor biosynthesis; coenzyme A biosynthesis; CoA from (R)-pantothenate: step 1/5. Catalyzes the phosphorylation of pantothenate (Pan), the first step in CoA biosynthesis. This is Type III pantothenate kinase from Geobacter sulfurreducens (strain ATCC 51573 / DSM 12127 / PCA).